The following is a 289-amino-acid chain: Homeobox protein Nkx-2.6 (289 aa).

2 disordered regions span residues 75 to 125 and 259 to 289; these read GSNP…PQRK and TPLA…VTAW. The segment at residues 123-182 is a DNA-binding region (homeobox); the sequence is QRKSRVLFSQAQVLALERRFKQQRYLTAPEREHLASALQLTSTQVKIWFQNRRYKSKSQR. Over residues 261-274 the composition is skewed to polar residues; that stretch reads LASSGFSPGGQSAA.

Belongs to the NK-2 homeobox family. Not detected in any neonate or adult tissues.

It is found in the nucleus. Functionally, acts as a transcriptional activator. In conjunction with NKX2-5, may play a role in both pharyngeal and cardiac embryonic development. The polypeptide is Homeobox protein Nkx-2.6 (Nkx2-6) (Mus musculus (Mouse)).